Reading from the N-terminus, the 275-residue chain is Dermonecrotic toxin SpeSicTox-betaIIA2i (275 aa).

Histidine 5 is a catalytic residue. The Mg(2+) site is built by glutamate 25 and aspartate 27. Catalysis depends on histidine 41, which acts as the Nucleophile. 2 cysteine pairs are disulfide-bonded: cysteine 45–cysteine 51 and cysteine 47–cysteine 190. Aspartate 85 provides a ligand contact to Mg(2+).

The protein belongs to the arthropod phospholipase D family. Class II subfamily. It depends on Mg(2+) as a cofactor. In terms of tissue distribution, expressed by the venom gland.

The protein resides in the secreted. It catalyses the reaction an N-(acyl)-sphingosylphosphocholine = an N-(acyl)-sphingosyl-1,3-cyclic phosphate + choline. The enzyme catalyses an N-(acyl)-sphingosylphosphoethanolamine = an N-(acyl)-sphingosyl-1,3-cyclic phosphate + ethanolamine. It carries out the reaction a 1-acyl-sn-glycero-3-phosphocholine = a 1-acyl-sn-glycero-2,3-cyclic phosphate + choline. The catalysed reaction is a 1-acyl-sn-glycero-3-phosphoethanolamine = a 1-acyl-sn-glycero-2,3-cyclic phosphate + ethanolamine. Dermonecrotic toxins cleave the phosphodiester linkage between the phosphate and headgroup of certain phospholipids (sphingolipid and lysolipid substrates), forming an alcohol (often choline) and a cyclic phosphate. This toxin acts on sphingomyelin (SM). It may also act on ceramide phosphoethanolamine (CPE), lysophosphatidylcholine (LPC) and lysophosphatidylethanolamine (LPE), but not on lysophosphatidylserine (LPS), and lysophosphatidylglycerol (LPG). It acts by transphosphatidylation, releasing exclusively cyclic phosphate products as second products. Induces dermonecrosis, hemolysis, increased vascular permeability, edema, inflammatory response, and platelet aggregation. The sequence is that of Dermonecrotic toxin SpeSicTox-betaIIA2i from Sicarius peruensis (Six-eyed sand spider).